We begin with the raw amino-acid sequence, 249 residues long: uncharacterized protein (249 aa).

The protein localises to the cytoplasm. It is found in the nucleus. The protein resides in the nucleolus. This is an uncharacterized protein from Schizosaccharomyces pombe (strain 972 / ATCC 24843) (Fission yeast).